Here is a 20-residue protein sequence, read N- to C-terminus: AIVEQQGAPXGLGRIINKXK.

The segment at alanine 1–lysine 20 is disordered.

This sequence belongs to the peptidase S8 family.

It is found in the secreted. In terms of biological role, capable of breaching the insect cuticle. The polypeptide is Cuticle-degrading protease-like protein (Metacordyceps chlamydosporia (Nematophagous fungus)).